The following is a 331-amino-acid chain: MAIELEDLGLSPDVADVMQRLARVGAGIARIISRNGLERDLGAGVGTNAGGDGQKALDVIADDAFRAALEGSAVAYYASEEQDEVVTLGEGSLALAIDPLDGSSNIDVNVSIGTIFSIFPAAAGPEASFLRPGTEQIAGGYIIYGPQCALVCSFGQGVQHWVLDLDAGIFRRMPDIRPLPAETSEFAINASNYRHWPQPIRAFVDDLVAGAEGPRGKNFNMRWIASLVAETHRILMRGGVFLYPGDERKGYERGRLRHVYECAPIAFLIANVGGGATDGCADILTALPDRLHARTPFVFGCASKVARVAAYHDLACEETSALFGSRGLFRS.

Mg(2+) contacts are provided by Glu-80, Asp-98, Leu-100, and Asp-101. Substrate contacts are provided by residues 101 to 104 and Asn-189; that span reads DGSS. Glu-261 is a Mg(2+) binding site.

The protein belongs to the FBPase class 1 family. In terms of assembly, homotetramer. Mg(2+) serves as cofactor.

The protein localises to the cytoplasm. It catalyses the reaction beta-D-fructose 1,6-bisphosphate + H2O = beta-D-fructose 6-phosphate + phosphate. It participates in carbohydrate biosynthesis; Calvin cycle. The polypeptide is Fructose-1,6-bisphosphatase class 1 2 (Cereibacter sphaeroides (strain ATCC 17023 / DSM 158 / JCM 6121 / CCUG 31486 / LMG 2827 / NBRC 12203 / NCIMB 8253 / ATH 2.4.1.) (Rhodobacter sphaeroides)).